A 123-amino-acid chain; its full sequence is Large ribosomal subunit protein uL14 (123 aa).

The protein belongs to the universal ribosomal protein uL14 family. As to quaternary structure, part of the 50S ribosomal subunit. Forms a cluster with proteins L3 and L19. In the 70S ribosome, L14 and L19 interact and together make contacts with the 16S rRNA in bridges B5 and B8.

Its function is as follows. Binds to 23S rRNA. Forms part of two intersubunit bridges in the 70S ribosome. The chain is Large ribosomal subunit protein uL14 from Serratia proteamaculans (strain 568).